Here is a 149-residue protein sequence, read N- to C-terminus: Arginine repressor (149 aa).

It belongs to the ArgR family.

It localises to the cytoplasm. It functions in the pathway amino-acid biosynthesis; L-arginine biosynthesis [regulation]. In terms of biological role, regulates arginine biosynthesis genes. The sequence is that of Arginine repressor from Listeria monocytogenes serotype 4b (strain F2365).